The following is a 274-amino-acid chain: Protein TIFY 11A (274 aa).

Disordered regions lie at residues 49–95 (SLAL…SQPG) and 139–176 (PINDENNNNKSSMVLPDLNEPTDNNHLTKEQQQQQEQN). One can recognise a Tify domain in the interval 92–127 (SQPGSSQLTIFFGGKVLVYNEFPVDKAKEIMEVAKQ). The segment covering 139–150 (PINDENNNNKSS) has biased composition (polar residues). A coiled-coil region spans residues 161 to 185 (DNNHLTKEQQQQQEQNQIVERIARR). Positions 182–206 (IARRASLHRFFAKRKDRAVARAPYQ) match the Jas motif. The Nuclear localization signal signature appears at 183 to 190 (ARRASLHR). The disordered stretch occupies residues 206–274 (QVNQNAGHHR…QSSKDLDLRL (69 aa)). Residues 249-274 (IKSDGDKDDIMKIEEGQSSKDLDLRL) are compositionally biased toward basic and acidic residues.

This sequence belongs to the TIFY/JAZ family. In terms of assembly, homo- and heterodimer. Interacts with MYC2, MYC3, MYC4, AFPH2/NINJA, TIFY10A/JAZ1, TIFY10B/JAZ2, TIFY11B/JAZ6, TIFY5A/JAZ8 and TIFY3B/JAZ12. As to quaternary structure, (Microbial infection) Interacts with the pathogenic Pseudomonas syringae HopZ1a protein. In terms of processing, (Microbial infection) Acetylated by Pseudomonas syringae HopZ1a. Ubiquitinated. Targeted for degradation by the SCF(COI1) E3 ubiquitin ligase-proteasome pathway during jasmonate signaling.

Its subcellular location is the nucleus. Functionally, repressor of jasmonate responses. In Arabidopsis thaliana (Mouse-ear cress), this protein is Protein TIFY 11A.